A 193-amino-acid polypeptide reads, in one-letter code: Xanthine phosphoribosyltransferase (193 aa).

Xanthine contacts are provided by Leu-20 and Thr-27. Position 128–132 (Ala-128–Ala-132) interacts with 5-phospho-alpha-D-ribose 1-diphosphate. Residue Lys-156 participates in xanthine binding.

Belongs to the purine/pyrimidine phosphoribosyltransferase family. Xpt subfamily. Homodimer.

The protein resides in the cytoplasm. It carries out the reaction XMP + diphosphate = xanthine + 5-phospho-alpha-D-ribose 1-diphosphate. It participates in purine metabolism; XMP biosynthesis via salvage pathway; XMP from xanthine: step 1/1. Its function is as follows. Converts the preformed base xanthine, a product of nucleic acid breakdown, to xanthosine 5'-monophosphate (XMP), so it can be reused for RNA or DNA synthesis. This chain is Xanthine phosphoribosyltransferase, found in Streptococcus equi subsp. equi (strain 4047).